Here is an 80-residue protein sequence, read N- to C-terminus: UPF0125 protein XF_2346 (80 aa).

Belongs to the UPF0125 (RnfH) family.

This chain is UPF0125 protein XF_2346, found in Xylella fastidiosa (strain 9a5c).